We begin with the raw amino-acid sequence, 173 residues long: MTTVIEFYISDKEREIVIEQLLEFFPKKKNCKDIEKGIYDFTKQYCKSDNSYLRLAQAIYIDCAKNIMFNLKDENNHTIKKIKKLIDKNKYNAYNLAFLNPEELNKDNWIKIIARKQMTEETLNQMATVEWKPCYACKNTSYHFYQLQTRSADEPMTTFYICKNCMKTYKVNN.

The TFIIS central domain maps to 9 to 129; it reads ISDKEREIVI…EETLNQMATV (121 aa). The segment at 130-170 adopts a TFIIS-type zinc-finger fold; it reads EWKPCYACKNTSYHFYQLQTRSADEPMTTFYICKNCMKTYK. Residues C134, C137, C162, and C165 each contribute to the Zn(2+) site.

It belongs to the TFS-II family.

This chain is Transcription factor S-II-related protein, found in Acanthamoeba polyphaga mimivirus (APMV).